Reading from the N-terminus, the 180-residue chain is MAERMVGKQAPRFEMEAVLASKEFGKVSLEENMKNDKWTVLFFYPMDFTFVCPTEITAMSDRYDEFEDLDAEVIGVSTDTIHTHLAWINTDRKENGLGQLKYPLAADTNHEVSREYGVLIEEEGVALRGLFIINPEGELQYQTVFHNNIGRDVDETLRVLQALQTGGLCPANWKPGQKTL.

The region spanning 4-165 (RMVGKQAPRF…TLRVLQALQT (162 aa)) is the Thioredoxin domain. The active-site Cysteine sulfenic acid (-SOH) intermediate is C52.

Belongs to the peroxiredoxin family. AhpC/Prx1 subfamily. In terms of assembly, homodimer; disulfide-linked, upon oxidation.

The protein resides in the cytoplasm. It carries out the reaction a hydroperoxide + [protein]-dithiol = [protein]-disulfide + an alcohol + H2O. Its function is as follows. Thiol-specific peroxidase that catalyzes the reduction of hydrogen peroxide and organic hydroperoxides to water and alcohols, respectively. Plays a role in cell protection against oxidative stress by detoxifying peroxides. The polypeptide is Putative peroxiredoxin YkuU (ykuU) (Bacillus subtilis (strain 168)).